The primary structure comprises 433 residues: tRNA-2-methylthio-N(6)-dimethylallyladenosine synthase (433 aa).

In terms of domain architecture, MTTase N-terminal spans K4 to F119. Positions 13, 50, 82, 151, 155, and 158 each coordinate [4Fe-4S] cluster. Residues R137–K370 form the Radical SAM core domain. The TRAM domain maps to K373–V433.

The protein belongs to the methylthiotransferase family. MiaB subfamily. Monomer. The cofactor is [4Fe-4S] cluster.

It localises to the cytoplasm. It catalyses the reaction N(6)-dimethylallyladenosine(37) in tRNA + (sulfur carrier)-SH + AH2 + 2 S-adenosyl-L-methionine = 2-methylsulfanyl-N(6)-dimethylallyladenosine(37) in tRNA + (sulfur carrier)-H + 5'-deoxyadenosine + L-methionine + A + S-adenosyl-L-homocysteine + 2 H(+). In terms of biological role, catalyzes the methylthiolation of N6-(dimethylallyl)adenosine (i(6)A), leading to the formation of 2-methylthio-N6-(dimethylallyl)adenosine (ms(2)i(6)A) at position 37 in tRNAs that read codons beginning with uridine. This Campylobacter jejuni subsp. jejuni serotype O:2 (strain ATCC 700819 / NCTC 11168) protein is tRNA-2-methylthio-N(6)-dimethylallyladenosine synthase.